Reading from the N-terminus, the 83-residue chain is ATP synthase subunit c (83 aa).

Transmembrane regions (helical) follow at residues 10–30 (IAVALLIGMGALGTAIGFGLL) and 52–72 (MFIVAGLLDAVTMIGVGIALF).

This sequence belongs to the ATPase C chain family. As to quaternary structure, F-type ATPases have 2 components, F(1) - the catalytic core - and F(0) - the membrane proton channel. F(1) has five subunits: alpha(3), beta(3), gamma(1), delta(1), epsilon(1). F(0) has three main subunits: a(1), b(2) and c(10-14). The alpha and beta chains form an alternating ring which encloses part of the gamma chain. F(1) is attached to F(0) by a central stalk formed by the gamma and epsilon chains, while a peripheral stalk is formed by the delta and b chains.

The protein resides in the cell inner membrane. F(1)F(0) ATP synthase produces ATP from ADP in the presence of a proton or sodium gradient. F-type ATPases consist of two structural domains, F(1) containing the extramembraneous catalytic core and F(0) containing the membrane proton channel, linked together by a central stalk and a peripheral stalk. During catalysis, ATP synthesis in the catalytic domain of F(1) is coupled via a rotary mechanism of the central stalk subunits to proton translocation. Its function is as follows. Key component of the F(0) channel; it plays a direct role in translocation across the membrane. A homomeric c-ring of between 10-14 subunits forms the central stalk rotor element with the F(1) delta and epsilon subunits. The polypeptide is ATP synthase subunit c (Shewanella baltica (strain OS223)).